A 723-amino-acid polypeptide reads, in one-letter code: Probable C-mannosyltransferase DPY19L4 (723 aa).

The tract at residues 1–33 (MAEEEGPPVELRQRKKPKSSENKESAKEEKISD) is disordered. The residue at position 2 (alanine 2) is an N-acetylalanine. Residues 18 to 32 (KSSENKESAKEEKIS) are compositionally biased toward basic and acidic residues. The next 12 membrane-spanning stretches (helical) occupy residues 52-72 (IFIGCLAAVTSGMMYALYLSA), 161-178 (VYFYIGIVFGLQGIYVTA), 184-202 (WLMSGTWLAGMLTVAWFVI), 222-240 (LPYFACQIAALTGYLKSNL), 260-280 (MMMWEYSHYLLFLQAISLFLL), 292-310 (YEVYKIYIFSLFLGYLLQF), 316-337 (LVSPLLSLVAALMLAKCLQLNV), 349-370 (VINFYLVCTLTITLNIIMKMFV), 421-441 (LLPFYILVLIICFLSMLQVIF), 466-486 (IIYHVIHTILLGSLAMVIEGL), 489-509 (IWIPYVCMLAAFGVCSPELWM), and 522-542 (PILLALILSMAVPTIIGLSLW).

Belongs to the dpy-19 family. In terms of tissue distribution, widely expressed.

It localises to the membrane. Functionally, probable C-mannosyltransferase that mediates C-mannosylation of tryptophan residues on target proteins. The sequence is that of Probable C-mannosyltransferase DPY19L4 (DPY19L4) from Homo sapiens (Human).